The following is a 378-amino-acid chain: Mannitol-1-phosphate 5-dehydrogenase (378 aa).

4–15 (SVHFGAGNIGRG) is a binding site for NAD(+).

The protein belongs to the mannitol dehydrogenase family.

It catalyses the reaction D-mannitol 1-phosphate + NAD(+) = beta-D-fructose 6-phosphate + NADH + H(+). The chain is Mannitol-1-phosphate 5-dehydrogenase from Streptococcus pneumoniae (strain CGSP14).